The chain runs to 166 residues: Cytochrome P450 regulator dap1 (166 aa).

The chain crosses the membrane as a helical span at residues 4-21 (TQVVFIVTLFLYLLITRW). In terms of domain architecture, Cytochrome b5 heme-binding spans 42–145 (DYTPAELKEY…QKYQAVGRLI (104 aa)). Position 108 is a phosphoserine (S108). Residue Y138 participates in heme binding.

Belongs to the cytochrome b5 family. MAPR subfamily. In terms of assembly, interacts with erg5 and erg11.

Its subcellular location is the endoplasmic reticulum. It localises to the membrane. Required for sterol biosynthesis. Functions as a positive regulator of cytochrome P450 enzymes erg5 and erg11. Function requires bound heme. The polypeptide is Cytochrome P450 regulator dap1 (dap1) (Schizosaccharomyces pombe (strain 972 / ATCC 24843) (Fission yeast)).